Reading from the N-terminus, the 170-residue chain is MSTPARRRLMRDFKRMKEDAPPGVSASPLPDNVMVWNAMIIGPADTPYEDGTFRLLLEFDEEYPNKPPHVKFLSEMFHPNVYANGEICLDILQNRWTPTYDVASILTSIQSLFNDPNPASPANVEAATLFKDHKSQYVKRVKETVEKSWEDDLKDMDDGDDDDDDDDDDD.

In terms of domain architecture, UBC core spans 4-150 (PARRRLMRDF…VKETVEKSWE (147 aa)). C88 serves as the catalytic Glycyl thioester intermediate. Residues 148–170 (SWEDDLKDMDDGDDDDDDDDDDD) are disordered. Acidic residues predominate over residues 152–170 (DLKDMDDGDDDDDDDDDDD).

Belongs to the ubiquitin-conjugating enzyme family.

The protein resides in the cytoplasm. It is found in the nucleus. The enzyme catalyses S-ubiquitinyl-[E1 ubiquitin-activating enzyme]-L-cysteine + [E2 ubiquitin-conjugating enzyme]-L-cysteine = [E1 ubiquitin-activating enzyme]-L-cysteine + S-ubiquitinyl-[E2 ubiquitin-conjugating enzyme]-L-cysteine.. It participates in protein modification; protein ubiquitination. Catalyzes the covalent attachment of ubiquitin to other proteins. Plays a role in transcription regulation by catalyzing the monoubiquitination of histone H2B to form H2BK123ub1. H2BK123ub1 gives a specific tag for epigenetic transcriptional activation and is also a prerequisite for H3K4me and H3K79me formation. Also involved in postreplication repair of UV-damaged DNA, in N-end rule-dependent protein degradation and in sporulation. This is Ubiquitin-conjugating enzyme E2 2 (UBC2) from Eremothecium gossypii (strain ATCC 10895 / CBS 109.51 / FGSC 9923 / NRRL Y-1056) (Yeast).